Here is a 1091-residue protein sequence, read N- to C-terminus: Ninein homolog (1091 aa).

The segment at 1-361 (MEVSADPYEQ…AVEVDERHAS (361 aa)) is sufficient for binding to microtubules. 4 disordered regions span residues 100–216 (YIES…TTSP), 456–483 (AQTS…KEEE), 525–602 (KAKK…EELT), and 616–639 (KAAK…SLEQ). Phosphoserine is present on residues Ser-103, Ser-107, Ser-108, Ser-113, and Ser-141. Thr-144 carries the post-translational modification Phosphothreonine. Positions 168 to 177 (VQRSSSQSDL) are enriched in polar residues. The interval 487-526 (LMEKLAALQMENAQLRDKTDELTIEIESLNVELIRSKTKA) is sufficient for interaction with ens. 2 stretches are compositionally biased toward basic and acidic residues: residues 527–537 (KKQEKQEKQED) and 547–563 (RRGD…ESPR). Position 594 is a phosphoserine (Ser-594). Over residues 616–634 (KAAKEGRSLTPESRSKELE) the composition is skewed to basic and acidic residues. Ser-701 and Ser-714 each carry phosphoserine. The segment at 799 to 919 (AKSLADSKDE…TSCLSHEKCS (121 aa)) is disordered. A compositionally biased stretch (polar residues) spans 822–845 (SHKTASRNNLTTSETSIFSTTPFE). Residues 846-860 (SSQSGPSPTNSGNSN) are compositionally biased toward low complexity. Over residues 894 to 913 (ETSSTASGKSFESNSKTSCL) the composition is skewed to polar residues.

In terms of assembly, interacts with ens.

The protein localises to the cytoplasm. Its subcellular location is the cytoskeleton. It localises to the microtubule organizing center. The protein resides in the centrosome. It is found in the perinuclear region. Required for the positioning and anchorage of the microtubule minus-ends in various cells. In fat body cells, part of perinuclear non-centrosomal microtubule-organizing centers (ncMTOCs) which function to accommodate the organization of microtubule (MT) networks to control nuclear positioning and dynein motor-based retrograde endosomal trafficking. Within the ncMTOCs, Msp300 and shot anchors the ncMTOC at the nuclear surface and recruits the MT minus-end regulators Patronin and Nin for assembly, anchoring and/or stabilization of circumferential and radial MTs at the ncMTOC. This protein may also function with Patronin to recruit msps to the ncMTOC for the gamma-tubulin-independent elongation of radial MTs. In embryonic myotubes and larval myofibers, functions with ens to regulate myonuclear positioning and, as a consequence, is involved in muscle development. Likely functions by positively regulating ens. Essential for embryogenesis, likely by contributing to accurate chromosome segregation during early embryonic nuclear divisions. However, other reports found that it is not essential for embryogenesis or embryonic cellular divisions. In Drosophila melanogaster (Fruit fly), this protein is Ninein homolog.